Here is a 141-residue protein sequence, read N- to C-terminus: 3-hydroxyacyl-[acyl-carrier-protein] dehydratase FabZ (141 aa).

The active site involves H48.

The protein belongs to the thioester dehydratase family. FabZ subfamily.

It localises to the cytoplasm. The enzyme catalyses a (3R)-hydroxyacyl-[ACP] = a (2E)-enoyl-[ACP] + H2O. In terms of biological role, involved in unsaturated fatty acids biosynthesis. Catalyzes the dehydration of short chain beta-hydroxyacyl-ACPs and long chain saturated and unsaturated beta-hydroxyacyl-ACPs. The protein is 3-hydroxyacyl-[acyl-carrier-protein] dehydratase FabZ of Herpetosiphon aurantiacus (strain ATCC 23779 / DSM 785 / 114-95).